The chain runs to 726 residues: Prolyl endopeptidase-like (726 aa).

Phosphoserine is present on Ser-138. Residues Ser-558, Asp-644, and His-689 each act as charge relay system in the active site.

Belongs to the peptidase S9A family. Homodimer. Interacts with the AP-1 complex.

The protein resides in the cytoplasm. It is found in the cytosol. It localises to the golgi apparatus. Its subcellular location is the trans-Golgi network. The protein localises to the cytoskeleton. The protein resides in the nucleus. Its function is as follows. Serine peptidase whose precise substrate specificity remains unclear. Does not cleave peptides after a arginine or lysine residue. Regulates trans-Golgi network morphology and sorting by regulating the membrane binding of the AP-1 complex. May play a role in the regulation of synaptic vesicle exocytosis. The polypeptide is Prolyl endopeptidase-like (Prepl) (Rattus norvegicus (Rat)).